Here is a 125-residue protein sequence, read N- to C-terminus: Large ribosomal subunit protein uL18 (125 aa).

The protein belongs to the universal ribosomal protein uL18 family. As to quaternary structure, part of the 50S ribosomal subunit; part of the 5S rRNA/L5/L18/L25 subcomplex. Contacts the 5S and 23S rRNAs.

Its function is as follows. This is one of the proteins that bind and probably mediate the attachment of the 5S RNA into the large ribosomal subunit, where it forms part of the central protuberance. This chain is Large ribosomal subunit protein uL18, found in Anaplasma marginale (strain Florida).